Here is a 559-residue protein sequence, read N- to C-terminus: Cocaine esterase (559 aa).

Positions 1–26 (MRLHRLRARLSAVACGLLLLLVRGQG) are cleaved as a signal peptide. Pyrrolidone carboxylic acid is present on Gln27. A disulfide bridge connects residues Cys95 and Cys123. N-linked (GlcNAc...) asparagine glycosylation is present at Asn111. Ser228 functions as the Acyl-ester intermediate in the catalytic mechanism. Residue Asn276 is glycosylated (N-linked (GlcNAc...) asparagine). A disulfide bond links Cys280 and Cys291. Residues Glu345 and His457 each act as charge relay system in the active site. A Prevents secretion from ER motif is present at residues 556-559 (HTEL).

Belongs to the type-B carboxylesterase/lipase family. In terms of assembly, monomer. Post-translationally, glycosylated. As to expression, preferentially expressed in intestine with moderate expression in liver. Within the intestine, highest expression is found in small intestine with lower expression in colon and rectum.

It is found in the endoplasmic reticulum lumen. The enzyme catalyses cocaine + H2O = ecgonine methyl ester + benzoate + H(+). It catalyses the reaction a carboxylic ester + H2O = an alcohol + a carboxylate + H(+). The catalysed reaction is 4-methylumbelliferyl acetate + H2O = 4-methylumbelliferone + acetate + H(+). It carries out the reaction 2-(5Z,8Z,11Z,14Z-eicosatetraenoyl)-glycerol + H2O = glycerol + (5Z,8Z,11Z,14Z)-eicosatetraenoate + H(+). The enzyme catalyses prostaglandin E2 1-glyceryl ester + H2O = prostaglandin E2 + glycerol + H(+). It catalyses the reaction prostaglandin F2alpha 1-glyceryl ester + H2O = prostaglandin F2alpha + glycerol + H(+). Involved in the detoxification of xenobiotics and in the activation of ester and amide prodrugs. Shows high catalytic efficiency for hydrolysis of cocaine, 4-methylumbelliferyl acetate, heroin and 6-monoacetylmorphine. Hydrolyzes aspirin, substrates with large alcohol group and small acyl group and endogenous lipids such as triacylglycerol. Converts monoacylglycerides to free fatty acids and glycerol. Hydrolyzes of 2-arachidonoylglycerol and prostaglandins. This chain is Cocaine esterase, found in Homo sapiens (Human).